The sequence spans 365 residues: Peptide chain release factor 2 (365 aa).

Glutamine 251 carries the N5-methylglutamine modification.

It belongs to the prokaryotic/mitochondrial release factor family. Methylated by PrmC. Methylation increases the termination efficiency of RF2.

It is found in the cytoplasm. Its function is as follows. Peptide chain release factor 2 directs the termination of translation in response to the peptide chain termination codons UGA and UAA. This is Peptide chain release factor 2 from Neorickettsia sennetsu (strain ATCC VR-367 / Miyayama) (Ehrlichia sennetsu).